The primary structure comprises 462 residues: Toxin CqTX-A (462 aa).

The N-terminal stretch at 1-19 (MANMLYFSLLALLFMTGIA) is a signal peptide. Asn-174 carries N-linked (GlcNAc...) asparagine glycosylation.

The protein belongs to the jellyfish toxin family. Type I subfamily. Contains disulfide bonds. In terms of processing, N-glycosylated.

The protein localises to the secreted. It localises to the nematocyst. The protein resides in the target cell membrane. Functionally, critical allergen and main toxic protein of C.quadrigatus venom. Has potent hemolytic activity. Is lethal to crayfish. Causes cutaneous inflammation in humans. May act as a pore-forming toxin, disrupting normal transmembrane ion concentration gradients in susceptible cells. The sequence is that of Toxin CqTX-A from Chiropsoides quadrigatus (Box jellyfish).